The primary structure comprises 156 residues: Calcium-binding protein A (156 aa).

EF-hand domains are found at residues 4–39 (AITKDVEDMLRKFDSNGDGNITFDEAVKRLKETGSK), 40–75 (DPLRAASSMFISLDKDKDGIISIKEIHGHKADVAAK), 80–115 (AINNICNNFLKGYDTDKDGRISWDEVCNWVNKNNPD), and 118–153 (APLMIVENFFSELDKDNDRFVTKCELQEYVTKYKSL). Asp-17, Asn-19, Asp-21, Asn-23, Glu-28, Asp-53, Asp-55, Asp-57, Glu-64, Asp-93, Asp-95, Asp-97, Arg-99, Glu-104, Asp-131, Asp-133, Asp-135, and Glu-142 together coordinate Ca(2+).

This chain is Calcium-binding protein A (cbpA), found in Dictyostelium discoideum (Social amoeba).